The sequence spans 175 residues: 2-oxo-4-hydroxy-4-carboxy-5-ureidoimidazoline decarboxylase (175 aa).

The active-site Proton donor is H67. Residues P68, S84 to Q88, and F119 to A123 contribute to the substrate site. The Microbody targeting signal signature appears at T173–L175.

Belongs to the OHCU decarboxylase family.

It is found in the peroxisome. The catalysed reaction is 5-hydroxy-2-oxo-4-ureido-2,5-dihydro-1H-imidazole-5-carboxylate + H(+) = (S)-allantoin + CO2. It participates in purine metabolism; urate degradation; (S)-allantoin from urate: step 3/3. Catalyzes the stereoselective decarboxylation of 2-oxo-4-hydroxy-4-carboxy-5-ureidoimidazoline (OHCU) to (S)-allantoin. The polypeptide is 2-oxo-4-hydroxy-4-carboxy-5-ureidoimidazoline decarboxylase (urad) (Xenopus laevis (African clawed frog)).